The chain runs to 278 residues: Type II restriction enzyme AgeI (278 aa).

This sequence belongs to the BsaWI type II restriction endonuclease family.

It catalyses the reaction Endonucleolytic cleavage of DNA to give specific double-stranded fragments with terminal 5'-phosphates.. In terms of biological role, a P subtype restriction enzyme that recognizes the double-stranded sequence 5'-ACCGGT-3' and cleaves after A-1. The sequence is that of Type II restriction enzyme AgeI (ageIR) from Thalassovita gelatinovora (Thalassobius gelatinovorus).